Reading from the N-terminus, the 716-residue chain is Protein C-mannosyl-transferase DPY19L3 (716 aa).

The Cytoplasmic segment spans residues 1–43; sequence MMSIRQRREIRATEVSEDFPAQEENVKLENKLPSGCTSRRLWK. A helical transmembrane segment spans residues 44-64; that stretch reads ILSLTIGGTIALCIGLLTSVY. At 65–154 the chain is on the lumenal side; it reads LATLHENDLW…RVLPIQKYLE (90 aa). Asn118 is a glycosylation site (N-linked (GlcNAc...) asparagine). A helical transmembrane segment spans residues 155-182; sequence PVYFYIYTLFGLQAIYVTALYITSWLLS. Residues 183–184 are Cytoplasmic-facing; it reads GT. Positions 185–197 form an intramembrane region, name=3; sequence WLSGLLAAFWYVT. The Cytoplasmic segment spans residues 198-215; it reads NRIDTTRVEFTIPLRENW. Positions 216 to 230 form an intramembrane region, name=4; it reads ALPFFAIQIAAITYF. Residues 231–239 are Cytoplasmic-facing; that stretch reads LRPNLQPLS. The helical transmembrane segment at 240 to 256 threads the bilayer; the sequence is ERLTLLAIFISTFLFSL. At 257–262 the chain is on the lumenal side; it reads TWQFNQ. A helical transmembrane segment spans residues 263–279; that stretch reads FMMLMQALVLFTLDSLD. Residues 280 to 289 are Cytoplasmic-facing; the sequence is MLPAVKATWL. A helical membrane pass occupies residues 290–306; it reads YGIQITSLLLVCILQFF. Over 307–308 the chain is Lumenal; sequence NS. A helical membrane pass occupies residues 309–323; sequence MILGSLLISFNLSVF. Over 324–338 the chain is Cytoplasmic; that stretch reads IARKLQKNLKTGSFL. The helical transmembrane segment at 339-359 threads the bilayer; the sequence is NRLGKLLLHLFMVLCLTLFLN. At 360-414 the chain is on the lumenal side; that stretch reads NIIKKILNLKSDEHIFKFLKAKFGLGATRDFDANLYLCEEAFGLLPFNTFGRLSD. Residues 415-437 traverse the membrane as a helical segment; the sequence is TLLFYAYIFVLSITVIVAFVVAF. Over 438 to 465 the chain is Cytoplasmic; the sequence is HNLSDSTNQQSVGKMEKGTVDLKPETAY. The chain crosses the membrane as a helical span at residues 466 to 485; sequence NLIHTILFGFLALSTMRMKY. Residues 486–487 are Lumenal-facing; sequence LW. Residues 488–499 form a helical membrane-spanning segment; sequence TSHMCVFASFGL. The Cytoplasmic segment spans residues 500–522; that stretch reads CSPEIWELLLKSVHLYNPKRICI. The helical transmembrane segment at 523-539 threads the bilayer; that stretch reads MRYSVPILILLYLCYKF. At 540–716 the chain is on the lumenal side; sequence WPGMMDELSE…FHVYKLSRNK (177 aa). N-linked (GlcNAc...) asparagine glycosylation occurs at Asn704.

This sequence belongs to the dpy-19 family. As to expression, widely expressed.

The protein resides in the endoplasmic reticulum membrane. The catalysed reaction is L-tryptophyl-[protein] + a di-trans,poly-cis-dolichyl beta-D-mannosyl phosphate = C-alpha-D-mannosyl-L-tryptophyl-[protein] + a di-trans,poly-cis-dolichyl phosphate + H(+). Its pathway is protein modification; protein glycosylation. Its function is as follows. C-mannosyltransferase that mediates C-mannosylation of tryptophan residues on target proteins. The reaction occurs on the luminal side of the endoplasmic reticulum and involves the transfer of a mannose unit from a dolichylphosphate mannose (Dol-P-Man) donor to an acceptor protein containing a WxxW or WxxC consensus sequence. C-mannosylates RSPO1, a Wnt signaling regulator, preferentially at the first Trp residue in the sequence WxxW. C-mannosylates the netrin receptor UNC5A, preferentially at the third tryptophan of WxxWxxWxxC sequence. In terms of biological role, has no C-mannosyltransferase activity. This is Protein C-mannosyl-transferase DPY19L3 (DPY19L3) from Homo sapiens (Human).